Consider the following 397-residue polypeptide: Tryptophan synthase beta chain (397 aa).

An N6-(pyridoxal phosphate)lysine modification is found at K91.

This sequence belongs to the TrpB family. In terms of assembly, tetramer of two alpha and two beta chains. Pyridoxal 5'-phosphate is required as a cofactor.

The enzyme catalyses (1S,2R)-1-C-(indol-3-yl)glycerol 3-phosphate + L-serine = D-glyceraldehyde 3-phosphate + L-tryptophan + H2O. It functions in the pathway amino-acid biosynthesis; L-tryptophan biosynthesis; L-tryptophan from chorismate: step 5/5. The beta subunit is responsible for the synthesis of L-tryptophan from indole and L-serine. This chain is Tryptophan synthase beta chain, found in Bacillus cereus (strain ATCC 14579 / DSM 31 / CCUG 7414 / JCM 2152 / NBRC 15305 / NCIMB 9373 / NCTC 2599 / NRRL B-3711).